The sequence spans 200 residues: Pyridoxal 5'-phosphate synthase subunit PdxT (200 aa).

46–48 (GES) serves as a coordination point for L-glutamine. Catalysis depends on C78, which acts as the Nucleophile. Residues R107 and 138–139 (IR) each bind L-glutamine. Catalysis depends on charge relay system residues H175 and E177.

It belongs to the glutaminase PdxT/SNO family. In the presence of PdxS, forms a dodecamer of heterodimers. Only shows activity in the heterodimer.

It carries out the reaction aldehydo-D-ribose 5-phosphate + D-glyceraldehyde 3-phosphate + L-glutamine = pyridoxal 5'-phosphate + L-glutamate + phosphate + 3 H2O + H(+). The catalysed reaction is L-glutamine + H2O = L-glutamate + NH4(+). It functions in the pathway cofactor biosynthesis; pyridoxal 5'-phosphate biosynthesis. Functionally, catalyzes the hydrolysis of glutamine to glutamate and ammonia as part of the biosynthesis of pyridoxal 5'-phosphate. The resulting ammonia molecule is channeled to the active site of PdxS. This is Pyridoxal 5'-phosphate synthase subunit PdxT from Corynebacterium glutamicum (strain ATCC 13032 / DSM 20300 / JCM 1318 / BCRC 11384 / CCUG 27702 / LMG 3730 / NBRC 12168 / NCIMB 10025 / NRRL B-2784 / 534).